Consider the following 466-residue polypeptide: Oxysterol-binding protein 4 (466 aa).

Positions 1–12 (MEIGTSSTTNNI) are enriched in polar residues. Residues 1–67 (MEIGTSSTTN…STSPPSPPIE (67 aa)) form a disordered region. Residues 24 to 45 (NNNNHNNNSSNNSSNNNSISSS) show a composition bias toward low complexity. Residues 46 to 60 (PTDSSQLMNGEQSTS) show a composition bias toward polar residues.

Belongs to the OSBP family.

The polypeptide is Oxysterol-binding protein 4 (osbD) (Dictyostelium discoideum (Social amoeba)).